Reading from the N-terminus, the 241-residue chain is Beta-casein (241 aa).

Residues 1-15 (MKILILACLVALALA) form the signal peptide. The segment at 21-45 (LNVSSETVESLSSNEPDSSSEESIT) is disordered. The residue at position 24 (S24) is a Phosphoserine; in form 4-P, form 5-P, form 6-P and form 7-P. S25 is modified (phosphoserine; in form 7-P). T27 is modified (phosphothreonine; in form 6-P and form 7-P). S30 and S32 each carry phosphoserine. A Phosphoserine; in form 5-P, form 6-P and form 7-P modification is found at S33. Residues S38, S39, and S40 each carry the phosphoserine; in form 4-P, form 5-P, form 6-P and form 7-P modification. N150 bears the Deamidated asparagine mark.

Belongs to the beta-casein family. In terms of processing, there are at least five different forms found in milk, with varying degrees of phosphorylation. These include form 3-P which is phosphorylated at three sites that have not been determined, this form is present in very low amounts, form 4-P which is phosphorylated at four sites, form 5-P which is phosphorylated at five sites, form 6-P which is phosphorylated at six sites, and form 7-P which is phosphorylated at seven sites. Spontaneous deamidation of Asn-150 produces aspartate or isoaspartate. As to expression, mammary gland specific. Secreted in milk.

It is found in the secreted. Its function is as follows. Important role in determination of the surface properties of the casein micelles. In Equus caballus (Horse), this protein is Beta-casein.